A 311-amino-acid polypeptide reads, in one-letter code: Ribosomal protein L11 methyltransferase (311 aa).

The S-adenosyl-L-methionine site is built by Thr-160, Gly-181, Asp-203, and Asn-246.

It belongs to the methyltransferase superfamily. PrmA family.

The protein resides in the cytoplasm. It carries out the reaction L-lysyl-[protein] + 3 S-adenosyl-L-methionine = N(6),N(6),N(6)-trimethyl-L-lysyl-[protein] + 3 S-adenosyl-L-homocysteine + 3 H(+). Functionally, methylates ribosomal protein L11. The sequence is that of Ribosomal protein L11 methyltransferase from Macrococcus caseolyticus (strain JCSC5402) (Macrococcoides caseolyticum).